The primary structure comprises 175 residues: Glutamyl-tRNA(Gln) amidotransferase subunit F, mitochondrial (175 aa).

The N-terminal 19 residues, 1–19 (MLKVSARHAPVLRLPRRFY), are a transit peptide targeting the mitochondrion.

This sequence belongs to the GatF family. As to quaternary structure, subunit of the heterotrimeric GatFAB amidotransferase (AdT) complex, composed of A, B and F subunits.

Its subcellular location is the mitochondrion inner membrane. The catalysed reaction is L-glutamyl-tRNA(Gln) + L-glutamine + ATP + H2O = L-glutaminyl-tRNA(Gln) + L-glutamate + ADP + phosphate + H(+). In terms of biological role, allows the formation of correctly charged Gln-tRNA(Gln) through the transamidation of misacylated Glu-tRNA(Gln) in the mitochondria. The reaction takes place in the presence of glutamine and ATP through an activated gamma-phospho-Glu-tRNA(Gln). Required for proper protein synthesis within the mitochondrion. The chain is Glutamyl-tRNA(Gln) amidotransferase subunit F, mitochondrial from Lachancea thermotolerans (strain ATCC 56472 / CBS 6340 / NRRL Y-8284) (Yeast).